Here is a 236-residue protein sequence, read N- to C-terminus: uncharacterized protein (236 aa).

Residues 1-23 (MRRILSILVFAIMLAGCSSNAST) form the signal peptide. Residues 22 to 62 (STEKQHAGGEKTVKAEPQSTSSQKDSTDDYQPNSQVTDDRT) form a disordered region. Residues 24–35 (EKQHAGGEKTVK) are compositionally biased toward basic and acidic residues.

This is an uncharacterized protein from Bacillus subtilis (strain 168).